The chain runs to 78 residues: Acyl carrier protein (78 aa).

The Carrier domain occupies 2–77; sequence SEIASRVKAI…DAVSYIEANA (76 aa). Residue Ser37 is modified to O-(pantetheine 4'-phosphoryl)serine.

Belongs to the acyl carrier protein (ACP) family. 4'-phosphopantetheine is transferred from CoA to a specific serine of apo-ACP by AcpS. This modification is essential for activity because fatty acids are bound in thioester linkage to the sulfhydryl of the prosthetic group.

Its subcellular location is the cytoplasm. It functions in the pathway lipid metabolism; fatty acid biosynthesis. Functionally, carrier of the growing fatty acid chain in fatty acid biosynthesis. The chain is Acyl carrier protein from Phocaeicola vulgatus (strain ATCC 8482 / DSM 1447 / JCM 5826 / CCUG 4940 / NBRC 14291 / NCTC 11154) (Bacteroides vulgatus).